A 67-amino-acid polypeptide reads, in one-letter code: Conotoxin Cal14.2c (67 aa).

A signal peptide spans 1–20 (MNVTVMFLVLLLLTMPLTDG). Positions 21-48 (FNIRATNGGELFGPVQRDAGNVLDHGFQ) are excised as a propeptide.

Belongs to the conotoxin L superfamily. In terms of processing, contains 2 disulfide bonds. As to expression, expressed by the venom duct.

Its subcellular location is the secreted. Functionally, probable neurotoxin with unknown target. Possibly targets ion channels. The protein is Conotoxin Cal14.2c of Californiconus californicus (California cone).